The chain runs to 477 residues: Putative BTB/POZ domain-containing protein R830 (477 aa).

Residues 13 to 83 (SDLELILVDK…FYGIETNNDP (71 aa)) enclose the BTB domain.

It belongs to the mimivirus BTB/WD family.

The polypeptide is Putative BTB/POZ domain-containing protein R830 (Acanthamoeba polyphaga mimivirus (APMV)).